The primary structure comprises 149 residues: Golgi apparatus membrane protein tvp-18 (149 aa).

N-linked (GlcNAc...) asparagine glycosylation is present at N11. 4 helical membrane passes run 18 to 38, 41 to 61, 84 to 103, and 108 to 128; these read WLGI…IFTF, IIIV…FVEV, NYTR…LSCI, and SLLV…LAAL.

The protein belongs to the TVP18 family.

It localises to the golgi apparatus membrane. In terms of biological role, golgi membrane protein involved in vesicular trafficking. The polypeptide is Golgi apparatus membrane protein tvp-18 (tvp-18) (Neurospora crassa (strain ATCC 24698 / 74-OR23-1A / CBS 708.71 / DSM 1257 / FGSC 987)).